The primary structure comprises 292 residues: 33 kDa chaperonin (292 aa).

2 disulfides stabilise this stretch: Cys238–Cys240 and Cys271–Cys274.

The protein belongs to the HSP33 family. Under oxidizing conditions two disulfide bonds are formed involving the reactive cysteines. Under reducing conditions zinc is bound to the reactive cysteines and the protein is inactive.

Its subcellular location is the cytoplasm. Redox regulated molecular chaperone. Protects both thermally unfolding and oxidatively damaged proteins from irreversible aggregation. Plays an important role in the bacterial defense system toward oxidative stress. The polypeptide is 33 kDa chaperonin (Latilactobacillus sakei subsp. sakei (strain 23K) (Lactobacillus sakei subsp. sakei)).